The following is a 435-amino-acid chain: Glutamate-1-semialdehyde 2,1-aminomutase (435 aa).

At lysine 266 the chain carries N6-(pyridoxal phosphate)lysine.

Belongs to the class-III pyridoxal-phosphate-dependent aminotransferase family. HemL subfamily. As to quaternary structure, homodimer. Pyridoxal 5'-phosphate is required as a cofactor.

The protein resides in the cytoplasm. The enzyme catalyses (S)-4-amino-5-oxopentanoate = 5-aminolevulinate. It participates in porphyrin-containing compound metabolism; protoporphyrin-IX biosynthesis; 5-aminolevulinate from L-glutamyl-tRNA(Glu): step 2/2. The sequence is that of Glutamate-1-semialdehyde 2,1-aminomutase from Nitrosomonas europaea (strain ATCC 19718 / CIP 103999 / KCTC 2705 / NBRC 14298).